Reading from the N-terminus, the 549-residue chain is Cytoplasmic trehalase (549 aa).

Residues Arg168, 175–176 (WD), Asn212, 221–223 (RSQ), 292–294 (RDE), and Gly324 each bind substrate. Catalysis depends on proton donor/acceptor residues Asp326 and Glu509. Glu525 lines the substrate pocket.

It belongs to the glycosyl hydrolase 37 family. Monomer.

The protein localises to the cytoplasm. The enzyme catalyses alpha,alpha-trehalose + H2O = alpha-D-glucose + beta-D-glucose. It participates in glycan degradation; trehalose degradation; D-glucose from alpha,alpha-trehalose: step 1/1. Hydrolyzes trehalose to glucose. Could be involved, in cells returning to low osmolarity conditions, in the utilization of the accumulated cytoplasmic trehalose, which was synthesized in response to high osmolarity. The chain is Cytoplasmic trehalase from Salmonella typhi.